A 94-amino-acid polypeptide reads, in one-letter code: Late cornified envelope-like proline-rich protein 1 (94 aa).

2 disordered regions span residues 1–26 (MSSD…CEQK) and 47–94 (CPRE…PPPE). Positions 53–94 (PAPPKCPPCPSPSPSSCPPKPCAKPCPPKCPSSCPPPCPPPE) are enriched in pro residues.

The protein belongs to the cornifin (SPRR) family.

The sequence is that of Late cornified envelope-like proline-rich protein 1 (LELP1) from Macaca fascicularis (Crab-eating macaque).